The sequence spans 60 residues: Small integral membrane protein 3 (60 aa).

Residues 20-40 (IWAIVLIILATVVIMTSLFLC) form a helical membrane-spanning segment.

The protein resides in the membrane. The protein is Small integral membrane protein 3 (Smim3) of Rattus norvegicus (Rat).